The primary structure comprises 217 residues: Protein LURP-one-related 2 (217 aa).

Belongs to the LOR family.

Might be related to the phospholipid scramblase and tubby-like superfamily of membrane tethered transcription factors. The protein is Protein LURP-one-related 2 of Arabidopsis thaliana (Mouse-ear cress).